Consider the following 357-residue polypeptide: DNA replication and repair protein RecF (357 aa).

Position 30 to 37 (30 to 37 (GANGSGKT)) interacts with ATP.

This sequence belongs to the RecF family.

It is found in the cytoplasm. In terms of biological role, the RecF protein is involved in DNA metabolism; it is required for DNA replication and normal SOS inducibility. RecF binds preferentially to single-stranded, linear DNA. It also seems to bind ATP. The sequence is that of DNA replication and repair protein RecF from Escherichia coli O7:K1 (strain IAI39 / ExPEC).